The chain runs to 321 residues: Acetyl-coenzyme A carboxylase carboxyl transferase subunit alpha (321 aa).

Positions 37–298 constitute a CoA carboxyltransferase C-terminal domain; it reads DLDDEIKRLQ…KQRILSDLED (262 aa).

The protein belongs to the AccA family. Acetyl-CoA carboxylase is a heterohexamer composed of biotin carboxyl carrier protein (AccB), biotin carboxylase (AccC) and two subunits each of ACCase subunit alpha (AccA) and ACCase subunit beta (AccD).

It is found in the cytoplasm. It carries out the reaction N(6)-carboxybiotinyl-L-lysyl-[protein] + acetyl-CoA = N(6)-biotinyl-L-lysyl-[protein] + malonyl-CoA. Its pathway is lipid metabolism; malonyl-CoA biosynthesis; malonyl-CoA from acetyl-CoA: step 1/1. Functionally, component of the acetyl coenzyme A carboxylase (ACC) complex. First, biotin carboxylase catalyzes the carboxylation of biotin on its carrier protein (BCCP) and then the CO(2) group is transferred by the carboxyltransferase to acetyl-CoA to form malonyl-CoA. This Mannheimia succiniciproducens (strain KCTC 0769BP / MBEL55E) protein is Acetyl-coenzyme A carboxylase carboxyl transferase subunit alpha.